The following is a 320-amino-acid chain: Small ribosomal subunit protein uS2 (320 aa).

The span at 1 to 22 (MADETTTDTPDVQDEDAPDEDA) shows a compositional bias: acidic residues. The tract at residues 1-83 (MADETTTDTP…SSSEEETSHR (83 aa)) is disordered. Residues 27-41 (DDTASDSTGEAAAAD) are compositionally biased toward low complexity. 2 stretches are compositionally biased toward acidic residues: residues 42–57 (TDAD…EDAP) and 65–78 (DDGD…SSEE).

The protein belongs to the universal ribosomal protein uS2 family.

This Salinibacter ruber (strain DSM 13855 / M31) protein is Small ribosomal subunit protein uS2.